Consider the following 802-residue polypeptide: Leucine--tRNA ligase (802 aa).

Positions 40–51 match the 'HIGH' region motif; the sequence is PYPSGAGLHVGH. The 'KMSKS' region signature appears at 576–580; the sequence is KMSKS. Lys-579 serves as a coordination point for ATP.

The protein belongs to the class-I aminoacyl-tRNA synthetase family.

It localises to the cytoplasm. It carries out the reaction tRNA(Leu) + L-leucine + ATP = L-leucyl-tRNA(Leu) + AMP + diphosphate. In Bacillus cereus (strain ATCC 14579 / DSM 31 / CCUG 7414 / JCM 2152 / NBRC 15305 / NCIMB 9373 / NCTC 2599 / NRRL B-3711), this protein is Leucine--tRNA ligase.